Consider the following 396-residue polypeptide: S-adenosylmethionine synthase (396 aa).

His16 serves as a coordination point for ATP. Asp18 contacts Mg(2+). Glu44 lines the K(+) pocket. Positions 57 and 100 each coordinate L-methionine. Residues 100 to 110 (QSVDIAQGVDR) form a flexible loop region. ATP-binding positions include 165-167 (DAK), Asp240, 246-247 (RK), Ala263, and Lys267. Asp240 is an L-methionine binding site. Lys271 provides a ligand contact to L-methionine.

The protein belongs to the AdoMet synthase family. In terms of assembly, homotetramer; dimer of dimers. Mg(2+) is required as a cofactor. It depends on K(+) as a cofactor.

It localises to the cytoplasm. It catalyses the reaction L-methionine + ATP + H2O = S-adenosyl-L-methionine + phosphate + diphosphate. It participates in amino-acid biosynthesis; S-adenosyl-L-methionine biosynthesis; S-adenosyl-L-methionine from L-methionine: step 1/1. Its function is as follows. Catalyzes the formation of S-adenosylmethionine (AdoMet) from methionine and ATP. The overall synthetic reaction is composed of two sequential steps, AdoMet formation and the subsequent tripolyphosphate hydrolysis which occurs prior to release of AdoMet from the enzyme. The chain is S-adenosylmethionine synthase from Pseudomonas savastanoi pv. phaseolicola (strain 1448A / Race 6) (Pseudomonas syringae pv. phaseolicola (strain 1448A / Race 6)).